A 173-amino-acid polypeptide reads, in one-letter code: Globin, cuticular isoform (173 aa).

The signal sequence occupies residues M1 to A16. Residues M17–E166 form the Globin domain. H113 serves as a coordination point for heme b.

It belongs to the globin family. As to expression, expressed only by adult nematodes in the gut.

It is found in the secreted. The protein localises to the extracellular space. The sequence is that of Globin, cuticular isoform (GLBC) from Nippostrongylus brasiliensis (Rat hookworm).